The following is a 195-amino-acid chain: TM2 domain-containing protein C41D11.9 (195 aa).

Positions 1–20 are cleaved as a signal peptide; it reads MLHKILFLICLASFIPTIGS. Residues 21 to 136 lie on the Extracellular side of the membrane; it reads ISGTKDVKSK…NWSSGYSWTK (116 aa). N-linked (GlcNAc...) asparagine glycans are attached at residues asparagine 55, asparagine 93, and asparagine 127. A TM2 domain is found at 131 to 179; it reads GYSWTKTMILSVVLGGFGADRFYLGLWKSAIGKLFSFGGLGVWTLVDVV. A helical membrane pass occupies residues 137-157; sequence TMILSVVLGGFGADRFYLGLW. At 158–163 the chain is on the cytoplasmic side; sequence KSAIGK. The helical transmembrane segment at 164 to 184 threads the bilayer; it reads LFSFGGLGVWTLVDVVLIAVG. The Extracellular segment spans residues 185–195; it reads YIKPYDGSMYI.

It belongs to the TM2 family.

It is found in the membrane. This Caenorhabditis elegans protein is TM2 domain-containing protein C41D11.9.